The primary structure comprises 51 residues: Otoconin-90 (51 aa).

It belongs to the phospholipase A2 family. As to quaternary structure, interacts with OTOL1.

The protein localises to the secreted. Major protein of the otoconia, a calcium carbonate structure in the saccule and utricle of the ear. Together with OTOL1, acts as a scaffold for otoconia biomineralization: sequesters calcium and forms interconnecting fibrils between otoconia that are incorporated into the calcium crystal structure. Together with OTOL1, modulates calcite crystal morphology and growth kinetics. It is unlikely that this protein has phospholipase A2 activity. The polypeptide is Otoconin-90 (OC90) (Cavia porcellus (Guinea pig)).